Reading from the N-terminus, the 185-residue chain is MTKDVINDMKSHMEKSVESLRREYQKVRTGRANTGLLDEIRVDFYGNPSPLNQVATLAVPEPRTITIQPWETKMIPVIEKAILNANLGFTPSNDGKLIRISLPPLTEERRKEIVKSLKKTAEDAKIAIRNIRRDAIDGLKKLEKDKKISEDDLKRAEKEVQDVTNVYVAKVDEVLAHKEKEVMEV.

It belongs to the RRF family.

It localises to the cytoplasm. In terms of biological role, responsible for the release of ribosomes from messenger RNA at the termination of protein biosynthesis. May increase the efficiency of translation by recycling ribosomes from one round of translation to another. The protein is Ribosome-recycling factor of Geobacter sulfurreducens (strain ATCC 51573 / DSM 12127 / PCA).